A 347-amino-acid chain; its full sequence is GMP reductase (347 aa).

Position 108-131 (Ala108–Ala131) interacts with NADP(+). Gly181 and Gly183 together coordinate K(+). Cys186 serves as the catalytic Thioimidate intermediate. Ile216–Val239 contacts NADP(+).

This sequence belongs to the IMPDH/GMPR family. GuaC type 1 subfamily. In terms of assembly, homotetramer.

The enzyme catalyses IMP + NH4(+) + NADP(+) = GMP + NADPH + 2 H(+). Its function is as follows. Catalyzes the irreversible NADPH-dependent deamination of GMP to IMP. It functions in the conversion of nucleobase, nucleoside and nucleotide derivatives of G to A nucleotides, and in maintaining the intracellular balance of A and G nucleotides. In Shigella boydii serotype 18 (strain CDC 3083-94 / BS512), this protein is GMP reductase.